The following is a 729-amino-acid chain: DNA topoisomerase 3 (729 aa).

A Toprim domain is found at 3-136 (KSVVIAEKPS…IKRLWISSVT (134 aa)). Glutamate 9 and aspartate 105 together coordinate Mg(2+). One can recognise a Topo IA-type catalytic domain in the interval 153–594 (YDNLYASAVA…EMKNYTKEIV (442 aa)). The interaction with DNA stretch occupies residues 187–192 (NCGRVQ). Tyrosine 310 serves as the catalytic O-(5'-phospho-DNA)-tyrosine intermediate. Over residues 686 to 713 (ERRKKESGNKADKRDVQKYMKQQKKEEE) the composition is skewed to basic and acidic residues. A disordered region spans residues 686-718 (ERRKKESGNKADKRDVQKYMKQQKKEEEPLNNP).

Belongs to the type IA topoisomerase family. Mg(2+) serves as cofactor.

The catalysed reaction is ATP-independent breakage of single-stranded DNA, followed by passage and rejoining.. Functionally, releases the supercoiling and torsional tension of DNA, which is introduced during the DNA replication and transcription, by transiently cleaving and rejoining one strand of the DNA duplex. Introduces a single-strand break via transesterification at a target site in duplex DNA. The scissile phosphodiester is attacked by the catalytic tyrosine of the enzyme, resulting in the formation of a DNA-(5'-phosphotyrosyl)-enzyme intermediate and the expulsion of a 3'-OH DNA strand. The free DNA strand then undergoes passage around the unbroken strand, thus removing DNA supercoils. Finally, in the religation step, the DNA 3'-OH attacks the covalent intermediate to expel the active-site tyrosine and restore the DNA phosphodiester backbone. This is DNA topoisomerase 3 from Bacillus cereus (strain ATCC 10987 / NRS 248).